The sequence spans 316 residues: L-lactate dehydrogenase 1 (316 aa).

The NAD(+) site is built by Val-17, Asp-38, Lys-43, and Tyr-69. Residues Arg-92 and 124–127 contribute to the substrate site; that span reads NPVD. NAD(+) contacts are provided by residues 122-124 and Thr-147; that span reads VSN. 152–155 serves as a coordination point for substrate; the sequence is DTSR. The active-site Proton acceptor is His-179. Substrate is bound at residue Thr-234.

It belongs to the LDH/MDH superfamily. LDH family. As to quaternary structure, homotetramer.

It is found in the cytoplasm. It catalyses the reaction (S)-lactate + NAD(+) = pyruvate + NADH + H(+). It functions in the pathway fermentation; pyruvate fermentation to lactate; (S)-lactate from pyruvate: step 1/1. Functionally, catalyzes the conversion of lactate to pyruvate. This Bifidobacterium longum subsp. longum (strain ATCC 15707 / DSM 20219 / JCM 1217 / NCTC 11818 / E194b) protein is L-lactate dehydrogenase 1.